A 492-amino-acid polypeptide reads, in one-letter code: Ketol-acid reductoisomerase (NADP(+)) (492 aa).

One can recognise a KARI N-terminal Rossmann domain in the interval 15–208 (AQLGKCRFMA…GGDRAGVLES (194 aa)). NADP(+) contacts are provided by residues 45–48 (CGAQ), Arg-68, Arg-76, Ser-78, and 108–110 (DKQ). Residue His-132 is part of the active site. Gly-158 serves as a coordination point for NADP(+). 2 consecutive KARI C-terminal knotted domains span residues 209–344 (SFVA…KAPP) and 345–485 (FEGK…MTDM). The Mg(2+) site is built by Asp-217, Glu-221, Glu-389, and Glu-393. Ser-414 is a binding site for substrate.

It belongs to the ketol-acid reductoisomerase family. Requires Mg(2+) as cofactor.

The enzyme catalyses (2R)-2,3-dihydroxy-3-methylbutanoate + NADP(+) = (2S)-2-acetolactate + NADPH + H(+). The catalysed reaction is (2R,3R)-2,3-dihydroxy-3-methylpentanoate + NADP(+) = (S)-2-ethyl-2-hydroxy-3-oxobutanoate + NADPH + H(+). It functions in the pathway amino-acid biosynthesis; L-isoleucine biosynthesis; L-isoleucine from 2-oxobutanoate: step 2/4. Its pathway is amino-acid biosynthesis; L-valine biosynthesis; L-valine from pyruvate: step 2/4. Its function is as follows. Involved in the biosynthesis of branched-chain amino acids (BCAA). Catalyzes an alkyl-migration followed by a ketol-acid reduction of (S)-2-acetolactate (S2AL) to yield (R)-2,3-dihydroxy-isovalerate. In the isomerase reaction, S2AL is rearranged via a Mg-dependent methyl migration to produce 3-hydroxy-3-methyl-2-ketobutyrate (HMKB). In the reductase reaction, this 2-ketoacid undergoes a metal-dependent reduction by NADPH to yield (R)-2,3-dihydroxy-isovalerate. This Edwardsiella ictaluri (strain 93-146) protein is Ketol-acid reductoisomerase (NADP(+)).